The chain runs to 241 residues: Spheroidene monooxygenase (241 aa).

The protein belongs to the CrtA family. It depends on heme as a cofactor.

It catalyses the reaction spheroidene + 4 reduced [2Fe-2S]-[ferredoxin] + 2 O2 + 4 H(+) = spheroiden-2-one + 4 oxidized [2Fe-2S]-[ferredoxin] + 3 H2O. The enzyme catalyses spirilloxanthin + 4 reduced [2Fe-2S]-[ferredoxin] + 2 O2 + 4 H(+) = 2-oxospirilloxanthin + 4 oxidized [2Fe-2S]-[ferredoxin] + 3 H2O. The catalysed reaction is 2-oxospirilloxanthin + 4 reduced [2Fe-2S]-[ferredoxin] + 2 O2 + 4 H(+) = 2,2'-dioxospirilloxanthin + 4 oxidized [2Fe-2S]-[ferredoxin] + 3 H2O. It carries out the reaction spheroidene + 2 reduced [2Fe-2S]-[ferredoxin] + O2 + 2 H(+) = 2-hydroxyspheroidene + 2 oxidized [2Fe-2S]-[ferredoxin] + H2O. It catalyses the reaction 2-hydroxyspheroidene + 2 reduced [2Fe-2S]-[ferredoxin] + O2 + 2 H(+) = 2,2-dihydroxyspheroidene + 2 oxidized [2Fe-2S]-[ferredoxin] + H2O. The enzyme catalyses 2,2-dihydroxyspheroidene = spheroiden-2-one + H2O. The catalysed reaction is spirilloxanthin + 2 reduced [2Fe-2S]-[ferredoxin] + O2 + 2 H(+) = 2-hydroxyspirilloxanthin + 2 oxidized [2Fe-2S]-[ferredoxin] + H2O. It carries out the reaction 2-hydroxyspirilloxanthin + 2 reduced [2Fe-2S]-[ferredoxin] + O2 + 2 H(+) = 2,2-dihydroxyspirilloxanthin + 2 oxidized [2Fe-2S]-[ferredoxin] + H2O. It catalyses the reaction 2,2-dihydroxyspirilloxanthin = 2-oxospirilloxanthin + H2O. The enzyme catalyses 2-oxospirilloxanthin + 2 reduced [2Fe-2S]-[ferredoxin] + O2 + 2 H(+) = 2'-hydroxy-2-oxospirilloxanthin + 2 oxidized [2Fe-2S]-[ferredoxin] + H2O. The catalysed reaction is 2'-hydroxy-2-oxospirilloxanthin + 2 reduced [2Fe-2S]-[ferredoxin] + O2 + 2 H(+) = 2',2'-dihydroxy-2-oxospirilloxanthin + 2 oxidized [2Fe-2S]-[ferredoxin] + H2O. It carries out the reaction 2',2'-dihydroxy-2-oxospirilloxanthin = 2,2'-dioxospirilloxanthin + H2O. It functions in the pathway carotenoid biosynthesis; spheroidene biosynthesis. Its function is as follows. Involved in the biosynthesis of the carotenoid spheroidene. Catalyzes the introduction of one keto group at the C-2 position of spheroidene. In vitro, can also catalyze the introduction of two keto groups at the C-2 and C-2' positions of spirilloxanthin, but spirilloxanthin biosynthesis pathway is not present in R.capsulatus. In Rhodobacter capsulatus (strain ATCC BAA-309 / NBRC 16581 / SB1003), this protein is Spheroidene monooxygenase.